The chain runs to 372 residues: Citrate/2-methylcitrate synthase (372 aa).

H188 contacts substrate. H223 is an active-site residue. Position 256–260 (256–260) interacts with CoA; that stretch reads KIMGF. Residue H262 is part of the active site. R272 contributes to the substrate binding site. Residue D314 is part of the active site. 2 residues coordinate substrate: R339 and R358.

Belongs to the citrate synthase family.

It carries out the reaction propanoyl-CoA + oxaloacetate + H2O = 2-methylcitrate + CoA + H(+). The enzyme catalyses oxaloacetate + acetyl-CoA + H2O = citrate + CoA + H(+). The protein operates within carbohydrate metabolism; tricarboxylic acid cycle; isocitrate from oxaloacetate: step 1/2. Functionally, involved in both the tricarboxylic acid (TCA) and methylcitric acid cycles. Has both 2-methylcitrate synthase and citrate synthase activities. Catalyzes the condensation of propionyl-CoA and oxaloacetate to yield 2-methylcitrate (2-MC) and CoA, and the condensation of acetyl-CoA and oxaloacetate to yield citrate and CoA. Has 2.3-fold higher activity as a 2-methylcitrate synthase. Catalyzes the formation of either (2S,3R)- or (2R,3S)-2-methylcitrate. This is Citrate/2-methylcitrate synthase from Bacillus subtilis (strain 168).